Consider the following 309-residue polypeptide: Xylose/arabinose import permease protein XacI (309 aa).

6 helical membrane-spanning segments follow: residues 29–49, 89–109, 121–141, 170–190, 227–247, and 282–302; these read LVVF…MTAI, LIMS…AAYG, MLML…VPLA, ELVP…TILF, MFGV…LFAF, and AAFL…EQFA. One can recognise an ABC transmembrane type-1 domain in the interval 85 to 297; it reads FFNSLIMSIP…VPTLILYVAF (213 aa).

The protein belongs to the binding-protein-dependent transport system permease family. The complex is composed of two ATP-binding proteins (XacJ and XacK), two transmembrane proteins (XacH and XacI) and a solute-binding protein (XacG).

Its subcellular location is the cell membrane. Its function is as follows. Part of the ABC transporter complex XacGHIJK involved in the uptake of xylose and arabinose. Responsible for the translocation of the substrate across the membrane. This chain is Xylose/arabinose import permease protein XacI, found in Haloferax volcanii (strain ATCC 29605 / DSM 3757 / JCM 8879 / NBRC 14742 / NCIMB 2012 / VKM B-1768 / DS2) (Halobacterium volcanii).